Here is a 148-residue protein sequence, read N- to C-terminus: MGTYTPLIYNIYNVHIWVFTESQGQIGQMSPRGKMETAVSQGQHKQLKDGHQHKGRKLSEEIASLLRLKECRRLNPASYYTPRRTSQSQSLSGSTFKEYNEYINEKDSSRAQRQNAAAVLSKLAHDFWENDCVIDEDIFEDSSDEEQS.

Serine 59 and serine 86 each carry phosphoserine.

It localises to the cytoplasmic granule. The protein resides in the cytoplasm. In terms of biological role, putative cyclin-dependent kinase (CDK) inhibitor necessary and sufficient for PHO pathway-dependent down-regulation of low-affinity phosphate transport. The protein is Putative cyclin-dependent kinase inhibitor SPL2 (SPL2) of Saccharomyces cerevisiae (strain ATCC 204508 / S288c) (Baker's yeast).